We begin with the raw amino-acid sequence, 164 residues long: Interferon gamma (164 aa).

A signal peptide spans 1–19; it reads MTCQTYCLFVLSVIMIYFG. N-linked (GlcNAc...) asparagine glycosylation is found at Asn42, Asn61, and Asn95.

The protein belongs to the type II (or gamma) interferon family. As to quaternary structure, homodimer.

The protein resides in the secreted. Produced by lymphocytes activated by specific antigens or mitogens. IFN-gamma, in addition to having antiviral activity, has important immunoregulatory functions. It is a potent activator of macrophages, it has antiproliferative effects on transformed cells and it can potentiate the antiviral and antitumor effects of the type I interferons. In Anas platyrhynchos (Mallard), this protein is Interferon gamma (IFNG).